The primary structure comprises 626 residues: Nuclear RNA export factor 1 (626 aa).

Positions 1–16 (MADEGKSYSEHDDERV) are enriched in basic and acidic residues. The tract at residues 1–85 (MADEGKSYSE…TTRPNRRGDA (85 aa)) is disordered. Residue A2 is modified to N-acetylalanine. Residues 2-60 (ADEGKSYSEHDDERVNFPQRKKKGRGPFRWKYGEGNRRSGRGGSGIRSSRLEEDDGDVA) form a minor non-specific RNA-binding region. The interval 2–118 (ADEGKSYSEH…GTSQDGTSKN (117 aa)) is RNA-binding (RBD). Positions 2 to 198 (ADEGKSYSEH…IIINPSAPPH (197 aa)) are interaction with ALYREF/THOC4 and LUZP4. S9 carries the phosphoserine modification. A compositionally biased stretch (basic residues) spans 20–29 (QRKKKGRGPF). Position 42 is an asymmetric dimethylarginine; alternate (R42). At R42 the chain carries Omega-N-methylarginine; alternate. The major non-specific RNA-binding stretch occupies residues 61-118 (MSDAQDGPRVRYNPYTTRPNRRGDAWHDRDRIHVTVRRDRAPPERGGAGTSQDGTSKN). The tract at residues 61–118 (MSDAQDGPRVRYNPYTTRPNRRGDAWHDRDRIHVTVRRDRAPPERGGAGTSQDGTSKN) is RNA binding. The Nuclear localization signal motif lies at 67 to 100 (GPRVRYNPYTTRPNRRGDAWHDRDRIHVTVRRDR). The Nuclear export signal motif lies at 83–110 (GDAWHDRDRIHVTVRRDRAPPERGGAGT). The RRM domain occupies 119–198 (WFKITIPYGR…IIINPSAPPH (80 aa)). Position 126 is a 3'-nitrotyrosine (Y126). LRR repeat units lie at residues 266-291 (ELLS…QKVP), 292-315 (NLKI…IKGL), 316-350 (KLEE…AIRE), and 351-378 (RFPK…TTLP). The NTF2 domain maps to 393–543 (LVLHFLQQYY…LCIVNDELFV (151 aa)). Positions 572–626 (PEQQEMLQAFSTQSGMNLEWSQKCLQDNNWDYTRSAQAFTHLKAKGEIPEVAFMK) constitute a TAP-C domain.

It belongs to the NXF family. As to quaternary structure, heterodimer (via NTF2 domain) with NXT1. The formation of NXF1-NXT1 heterodimers is required for the NXF1-mediated nuclear mRNA export. Forms a complex with RANBP2/NUP358, NXT1 and RANGAP1. Associates with the exon junction complex (EJC) and with the transcription/export (TREX) complex. Found in a mRNA complex with UPF3A and UPF3B. Found in a post-splicing complex with RBM8A, UPF1, UPF2, UPF3A, UPF3B and RNPS1. Interacts (via N-terminus) with DHX9 (via N-terminus); this interaction is direct and negatively regulates NXF1-mediated nuclear export of constitutive transport element (CTE)-containing cellular mRNAs. Interacts with ALYREF/THOC4. Interacts with FYTTD1/UIF. Interacts with EIF4A3. Interacts with NUPL2. Interacts with THOC5. Interacts with CHTOP. Interacts with FRG1 (via N-terminus). Interacts with LUZP4. Interacts with FMR1; the interaction occurs in a mRNA-dependent and polyribosomes-independent manner in the nucleus. Interacts with CPSF6 (via N-terminus); this interaction is direct. Interacts with RBM15. Interacts with RBM15B. Interacts with MCM3AP; this interaction is not mediated by RNA.

Its subcellular location is the nucleus. The protein localises to the nucleoplasm. It is found in the nucleus speckle. It localises to the cytoplasm. Functionally, involved in the nuclear export of mRNA species bearing retroviral constitutive transport elements (CTE) and in the export of mRNA from the nucleus to the cytoplasm (TAP/NFX1 pathway). The NXF1-NXT1 heterodimer is involved in the export of HSP70 mRNA in conjunction with ALYREF/THOC4 and THOC5 components of the TREX complex. ALYREF/THOC4-bound mRNA is thought to be transferred to the NXF1-NXT1 heterodimer for export. Also involved in nuclear export of m6A-containing mRNAs: interaction between SRSF3 and YTHDC1 facilitates m6A-containing mRNA-binding to both SRSF3 and NXF1, promoting mRNA nuclear export. In Pongo abelii (Sumatran orangutan), this protein is Nuclear RNA export factor 1 (NXF1).